The chain runs to 433 residues: Probable glycine dehydrogenase (decarboxylating) subunit 1 (433 aa).

It belongs to the GcvP family. N-terminal subunit subfamily. The glycine cleavage system is composed of four proteins: P, T, L and H. In this organism, the P 'protein' is a heterodimer of two subunits.

The enzyme catalyses N(6)-[(R)-lipoyl]-L-lysyl-[glycine-cleavage complex H protein] + glycine + H(+) = N(6)-[(R)-S(8)-aminomethyldihydrolipoyl]-L-lysyl-[glycine-cleavage complex H protein] + CO2. In terms of biological role, the glycine cleavage system catalyzes the degradation of glycine. The P protein binds the alpha-amino group of glycine through its pyridoxal phosphate cofactor; CO(2) is released and the remaining methylamine moiety is then transferred to the lipoamide cofactor of the H protein. This chain is Probable glycine dehydrogenase (decarboxylating) subunit 1, found in Thermoplasma acidophilum (strain ATCC 25905 / DSM 1728 / JCM 9062 / NBRC 15155 / AMRC-C165).